Here is a 252-residue protein sequence, read N- to C-terminus: 2-succinyl-6-hydroxy-2,4-cyclohexadiene-1-carboxylate synthase (252 aa).

Belongs to the AB hydrolase superfamily. MenH family. In terms of assembly, monomer.

The enzyme catalyses 5-enolpyruvoyl-6-hydroxy-2-succinyl-cyclohex-3-ene-1-carboxylate = (1R,6R)-6-hydroxy-2-succinyl-cyclohexa-2,4-diene-1-carboxylate + pyruvate. Its pathway is quinol/quinone metabolism; 1,4-dihydroxy-2-naphthoate biosynthesis; 1,4-dihydroxy-2-naphthoate from chorismate: step 3/7. It participates in quinol/quinone metabolism; menaquinone biosynthesis. In terms of biological role, catalyzes a proton abstraction reaction that results in 2,5-elimination of pyruvate from 2-succinyl-5-enolpyruvyl-6-hydroxy-3-cyclohexene-1-carboxylate (SEPHCHC) and the formation of 2-succinyl-6-hydroxy-2,4-cyclohexadiene-1-carboxylate (SHCHC). In Shigella flexneri serotype 5b (strain 8401), this protein is 2-succinyl-6-hydroxy-2,4-cyclohexadiene-1-carboxylate synthase.